A 101-amino-acid chain; its full sequence is Enhancer of yellow 2 transcription factor (101 aa).

This sequence belongs to the ENY2 family. In terms of assembly, component of the nuclear pore complex (NPC)-associated AMEX complex (anchoring and mRNA export complex), composed of at least e(y)2 and xmas-2. Component of the SAGA transcription coactivator-HAT complexes, at least composed of Ada2b, e(y)2, Pcaf/Gcn5, Taf10 and Nipped-A/Trrap. Within the SAGA complex, e(y)2, Sgf11, and not/nonstop form an additional subcomplex of SAGA called the DUB module (deubiquitination module). Component of the THO complex, composed of at least e(y)2, HPR1, THO2, THOC5, THOC6 and THOC7. Interacts with e(y)1. Interacts with su(Hw) (via zinc fingers). Interacts with xmas-2; required for localization to the nuclear periphery. Interacts with the nuclear pore complex (NPC).

The protein localises to the nucleus. It is found in the nucleoplasm. The protein resides in the cytoplasm. Involved in mRNA export coupled transcription activation by association with both the AMEX and the SAGA complexes. The SAGA complex is a multiprotein complex that activates transcription by remodeling chromatin and mediating histone acetylation and deubiquitination. Within the SAGA complex, participates in a subcomplex that specifically deubiquitinates histone H2B. The SAGA complex is recruited to specific gene promoters by activators, where it is required for transcription. Required for nuclear receptor-mediated transactivation. Involved in transcription elongation by recruiting the THO complex onto nascent mRNA. The AMEX complex functions in docking export-competent ribonucleoprotein particles (mRNPs) to the nuclear entrance of the nuclear pore complex (nuclear basket). AMEX participates in mRNA export and accurate chromatin positioning in the nucleus by tethering genes to the nuclear periphery. This chain is Enhancer of yellow 2 transcription factor, found in Drosophila sechellia (Fruit fly).